Consider the following 749-residue polypeptide: Metabotropic glutamate receptor-like protein M (749 aa).

Residues 1–22 (MIKLILSLIFLIICCNINPSES) form the signal peptide. At 23–385 (FKLITLTTGP…KIEFSSSVQK (363 aa)) the chain is on the extracellular side. N-linked (GlcNAc...) asparagine glycans are attached at residues Asn-67, Asn-164, Asn-257, Asn-271, and Asn-345. A helical transmembrane segment spans residues 386 to 406 (GFSIVSGCLIAFVILMMVGIV). At 407–419 (YYKDTPSIRSASP) the chain is on the cytoplasmic side. The chain crosses the membrane as a helical span at residues 420–440 (IFLNFSLIGGIIIYIGIIIWV). The Extracellular portion of the chain corresponds to 441–456 (GPISTHQCNARFWLVT). Residues 457-477 (LGFSTLIGSLVVKNFRIWLIF) traverse the membrane as a helical segment. Residues 478–492 (DNPELKAIKITNYQL) are Cytoplasmic-facing. A helical membrane pass occupies residues 493-513 (FPWVGLCLVINIVLMAILTSV). Residues 514–544 (GDLKAIEAQGIDSLGKYEYMTVCKMNSAGAS) are Extracellular-facing. Residues 545-565 (TLYSILAYFAALLLVGVFVSW) traverse the membrane as a helical segment. Residues 566-579 (KIRIVDIEEFNESK) are Cytoplasmic-facing. A helical membrane pass occupies residues 580–600 (AIANTLYAVSFCLFVIVPLMI). Over 601–609 (SPQEKQSET) the chain is Extracellular. Residues 610–630 (IILCVAGLFITTAALLIVFIP) traverse the membrane as a helical segment. At 631–749 (KFWRVFIYGK…EEPVKTESQE (119 aa)) the chain is on the cytoplasmic side. The disordered stretch occupies residues 658-749 (ARAESLSKNS…EEPVKTESQE (92 aa)). The segment covering 698 to 716 (SSLSEPNKPTKNNDGNVNV) has biased composition (polar residues). The span at 725–740 (FTDDTISEFDENEVNE) shows a compositional bias: acidic residues.

In the N-terminal section; belongs to the BMP lipoprotein family. The protein in the C-terminal section; belongs to the G-protein coupled receptor 3 family. GABA-B receptor subfamily.

The protein resides in the membrane. This is Metabotropic glutamate receptor-like protein M (grlM) from Dictyostelium discoideum (Social amoeba).